Here is a 318-residue protein sequence, read N- to C-terminus: MFKSWSKRLKYAPTPLVGDEVLRAQGLKCVFDEKTPEEFWALNGIDFTFEKNKIYCIIGNSGSGKSTLVTHFNGLLTSKYGTLSIRDFKNNHDIVISPNTKKIKNFKRLRKIISMVFQFPEYQLFKDTIQKDIMFGPVALGVHKEEAAKLAKFYLNRMGLDSSYLDVSPFELSGGQKRRVAIAGILAIQSEIIIFDEPTAGLDPKGESEMVELILESKKENKTVIVITHQMEKVLEIADEVILLDKGKILTSGTPYQIFTNPEIMQTTSIALPHVVQVINDLSLRNPIFKKLYDYEPRTVKDLAKVINEVIKNYEKRN.

The ABC transporter domain occupies 22–271; the sequence is LRAQGLKCVF…PEIMQTTSIA (250 aa). Residue 59-66 participates in ATP binding; the sequence is GNSGSGKS.

The protein belongs to the ABC transporter superfamily. Energy-coupling factor EcfA family. In terms of assembly, forms a stable energy-coupling factor (ECF) transporter complex composed of 2 membrane-embedded substrate-binding proteins (S component), 2 ATP-binding proteins (A component) and 2 transmembrane proteins (T component).

It is found in the cell membrane. ATP-binding (A) component of a common energy-coupling factor (ECF) ABC-transporter complex. Unlike classic ABC transporters this ECF transporter provides the energy necessary to transport a number of different substrates. This is Energy-coupling factor transporter ATP-binding protein EcfA2 from Mycoplasmoides gallisepticum (strain R(low / passage 15 / clone 2)) (Mycoplasma gallisepticum).